The primary structure comprises 121 residues: Large ribosomal subunit protein uL14 (121 aa).

This sequence belongs to the universal ribosomal protein uL14 family. In terms of assembly, part of the 50S ribosomal subunit. Forms a cluster with proteins L3 and L19. In the 70S ribosome, L14 and L19 interact and together make contacts with the 16S rRNA in bridges B5 and B8.

Binds to 23S rRNA. Forms part of two intersubunit bridges in the 70S ribosome. This chain is Large ribosomal subunit protein uL14, found in Phocaeicola vulgatus (strain ATCC 8482 / DSM 1447 / JCM 5826 / CCUG 4940 / NBRC 14291 / NCTC 11154) (Bacteroides vulgatus).